Consider the following 80-residue polypeptide: Antitoxin VapB15 (80 aa).

Positions Asp-60 to Ser-80 are disordered. Glu-67 contributes to the Mg(2+) binding site. Glu-67 lines the Mn(2+) pocket. Residues Asp-71–Ser-80 are compositionally biased toward basic and acidic residues.

As to quaternary structure, forms a VapB15-VapC15(2) heterotrimer and a VapB15(2)-VapC15(2) heterotetramer; each toxin pair forms a homodimer which creates a channel in which the antitoxin binds. It depends on Mg(2+) as a cofactor. The cofactor is Mn(2+).

In terms of biological role, antitoxin component of a type II toxin-antitoxin (TA) system. Neutralizes the toxic effect of cognate toxin VapC15. This Mycobacterium tuberculosis (strain CDC 1551 / Oshkosh) protein is Antitoxin VapB15 (vapB15).